Consider the following 317-residue polypeptide: Acetyl-coenzyme A carboxylase carboxyl transferase subunit alpha (317 aa).

Residues 40–293 (LEGRVRDAMV…ETVIGDALKE (254 aa)) enclose the CoA carboxyltransferase C-terminal domain.

It belongs to the AccA family. As to quaternary structure, acetyl-CoA carboxylase is a heterohexamer composed of biotin carboxyl carrier protein (AccB), biotin carboxylase (AccC) and two subunits each of ACCase subunit alpha (AccA) and ACCase subunit beta (AccD).

The protein resides in the cytoplasm. It catalyses the reaction N(6)-carboxybiotinyl-L-lysyl-[protein] + acetyl-CoA = N(6)-biotinyl-L-lysyl-[protein] + malonyl-CoA. The protein operates within lipid metabolism; malonyl-CoA biosynthesis; malonyl-CoA from acetyl-CoA: step 1/1. Component of the acetyl coenzyme A carboxylase (ACC) complex. First, biotin carboxylase catalyzes the carboxylation of biotin on its carrier protein (BCCP) and then the CO(2) group is transferred by the carboxyltransferase to acetyl-CoA to form malonyl-CoA. This Rhizobium meliloti (strain 1021) (Ensifer meliloti) protein is Acetyl-coenzyme A carboxylase carboxyl transferase subunit alpha.